The chain runs to 420 residues: Tyrosine--tRNA ligase 2 (420 aa).

Tyr-34 provides a ligand contact to L-tyrosine. The 'HIGH' region signature appears at 39-48 (PTGDSMHIGH). Positions 168 and 172 each coordinate L-tyrosine. A 'KMSKS' region motif is present at residues 230 to 234 (KFGKS). Lys-233 lines the ATP pocket. Residues 352–418 (KNIVEWLVDL…GKKNYSLVKL (67 aa)) enclose the S4 RNA-binding domain.

This sequence belongs to the class-I aminoacyl-tRNA synthetase family. TyrS type 1 subfamily. As to quaternary structure, homodimer.

It is found in the cytoplasm. The catalysed reaction is tRNA(Tyr) + L-tyrosine + ATP = L-tyrosyl-tRNA(Tyr) + AMP + diphosphate + H(+). Catalyzes the attachment of tyrosine to tRNA(Tyr) in a two-step reaction: tyrosine is first activated by ATP to form Tyr-AMP and then transferred to the acceptor end of tRNA(Tyr). The sequence is that of Tyrosine--tRNA ligase 2 from Bacillus cereus (strain ATCC 14579 / DSM 31 / CCUG 7414 / JCM 2152 / NBRC 15305 / NCIMB 9373 / NCTC 2599 / NRRL B-3711).